We begin with the raw amino-acid sequence, 670 residues long: Polar flagellar hook-associated protein 2 (670 aa).

Residues P226–I300 are disordered. Over residues A257–S266 the composition is skewed to acidic residues. Positions A272–E283 are enriched in low complexity. The segment covering A284–I300 has biased composition (basic and acidic residues). Residues G342–G428 are a coiled coil.

This sequence belongs to the FliD family. As to quaternary structure, homopentamer.

Its subcellular location is the secreted. It is found in the bacterial flagellum. Its function is as follows. Required for the morphogenesis and for the elongation of the flagellar filament by facilitating polymerization of the flagellin monomers at the tip of growing filament. Forms a capping structure, which prevents flagellin subunits (transported through the central channel of the flagellum) from leaking out without polymerization at the distal end. Important for swimming motility. This chain is Polar flagellar hook-associated protein 2 (fliDP), found in Vibrio parahaemolyticus serotype O3:K6 (strain RIMD 2210633).